The primary structure comprises 1823 residues: Vitellogenin (1823 aa).

The N-terminal stretch at methionine 1–alanine 14 is a signal peptide. Glutamine 17 carries the pyrrolidone carboxylic acid modification. The Vitellogenin domain maps to phenylalanine 18–valine 658. The interval lysine 953–alanine 986 is disordered. Positions glutamine 958–glutamine 976 are enriched in low complexity. Asparagine 1097 carries an N-linked (GlcNAc...) asparagine glycan. The disordered stretch occupies residues serine 1119 to leucine 1289. Composition is skewed to low complexity over residues proline 1128 to aspartate 1149 and serine 1178 to serine 1192. Over residues serine 1194–alanine 1206 the composition is skewed to basic residues. 2 stretches are compositionally biased toward low complexity: residues serine 1217–serine 1238 and serine 1253–serine 1286. N-linked (GlcNAc...) asparagine glycosylation occurs at asparagine 1298. Residues valine 1308–serine 1351 are disordered. Low complexity predominate over residues serine 1323 to aspartate 1344. The region spanning serine 1564 to glycine 1732 is the VWFD domain. Disulfide bonds link cysteine 1566–cysteine 1695 and cysteine 1589–cysteine 1731. Asparagine 1675 carries an N-linked (GlcNAc...) asparagine glycan.

Post-translationally, what corresponds to phosvitin in other species is lost during maturation of vitellogenin to lipovitellin. Produced by the liver, secreted into the blood and then sequestered by receptor mediated endocytosis into growing oocytes, where it is generally cleaved, giving rise to the respective yolk components lipovitellins 1 and 2.

Functionally, precursor of the major egg-yolk proteins that are sources of nutrients during early development of oviparous organisms. This is Vitellogenin from Ichthyomyzon unicuspis (Silver lamprey).